The chain runs to 431 residues: Fibrinogen C domain-containing protein 1 (431 aa).

The Cytoplasmic portion of the chain corresponds to 1–3 (MLC). A helical; Signal-anchor for type II membrane protein membrane pass occupies residues 4 to 24 (TVLLALAVLLAVAVTGAVLFL). Residues 25–431 (NHTHTPGTAP…MKIRPVREDR (407 aa)) lie on the Extracellular side of the membrane. One can recognise a Fibrinogen C-terminal domain in the interval 205-428 (CATGSRPRDC…FSEMKIRPVR (224 aa)). Cys214 and Cys243 form a disulfide bridge. A glycan (N-linked (GlcNAc...) asparagine) is linked at Asn310. 2 residues coordinate Ca(2+): Asp363 and Asp365. A disulfide bridge connects residues Cys371 and Cys384.

Homotetramer; disulfide-linked.

Its subcellular location is the membrane. In terms of biological role, acetyl group-binding receptor which shows a high-affinity and calcium-dependent binding to acetylated structures such as chitin, some N-acetylated carbohydrates, and amino acids, but not to their non-acetylated counterparts. Can facilitate the endocytosis of acetylated components. This is Fibrinogen C domain-containing protein 1 (FIBCD1) from Macaca fascicularis (Crab-eating macaque).